Consider the following 57-residue polypeptide: uncharacterized protein (57 aa).

Residues 1–57 (MPHYVVVKSPMRRRRSPRRRSPRVCYSPRRVACSPRRRSPRRRSPRRRSPRRSIVVY) are disordered. Over residues 10-22 (PMRRRRSPRRRSP) the composition is skewed to basic residues. Low complexity predominate over residues 23-34 (RVCYSPRRVACS). Basic residues predominate over residues 35–51 (PRRRSPRRRSPRRRSPR).

This is an uncharacterized protein from Acheta domesticus (House cricket).